The following is a 317-amino-acid chain: UV DNA damage endonuclease (317 aa).

It belongs to the uve1/UvsE family.

Its function is as follows. Component in a DNA repair pathway. Removal of UV LIGHT damaged nucleotides. Recognizes pyrimidine dimers and cleave a phosphodiester bond immediately 5' to the lesion. The protein is UV DNA damage endonuclease of Bacillus mycoides (strain KBAB4) (Bacillus weihenstephanensis).